The primary structure comprises 453 residues: Serine incorporator 1 (453 aa).

A lipid anchor (N-myristoyl glycine) is attached at G2. The Cytoplasmic segment spans residues G2–R39. A helical transmembrane segment spans residues L40–G60. The Lumenal portion of the chain corresponds to M61 to K88. The chain crosses the membrane as a helical span at residues A89 to I109. Residues K110 to N123 lie on the Cytoplasmic side of the membrane. Residues G124–P144 traverse the membrane as a helical segment. The Lumenal segment spans residues E145–V151. The chain crosses the membrane as a helical span at residues W152 to I172. Topologically, residues D173–A197 are cytoplasmic. A helical membrane pass occupies residues L198 to V218. Topologically, residues Y219–A231 are lumenal. A helical transmembrane segment spans residues F232 to I252. Topologically, residues Q253–S259 are cytoplasmic. Residues G260–T280 form a helical membrane-spanning segment. Residues N281–S309 are Lumenal-facing. A helical transmembrane segment spans residues V310–Y330. Residues S331–S387 lie on the Cytoplasmic side of the membrane. The residue at position 351 (S351) is a Phosphoserine. T352 bears the Phosphothreonine mark. A Phosphoserine modification is found at S364. Residues F388–Y408 traverse the membrane as a helical segment. Over R409–K426 the chain is Lumenal. Residues I427–L447 traverse the membrane as a helical segment. At T448–D453 the chain is on the cytoplasmic side.

It belongs to the TDE1 family. Interacts with SPTLC1.

The protein resides in the endoplasmic reticulum membrane. Its function is as follows. Enhances the incorporation of serine into phosphatidylserine and sphingolipids. The sequence is that of Serine incorporator 1 (SERINC1) from Bos taurus (Bovine).